Here is a 173-residue protein sequence, read N- to C-terminus: Crossover junction endodeoxyribonuclease RuvC (173 aa).

Residues D8, E67, and D139 contribute to the active site. Mg(2+) contacts are provided by D8, E67, and D139.

The protein belongs to the RuvC family. As to quaternary structure, homodimer which binds Holliday junction (HJ) DNA. The HJ becomes 2-fold symmetrical on binding to RuvC with unstacked arms; it has a different conformation from HJ DNA in complex with RuvA. In the full resolvosome a probable DNA-RuvA(4)-RuvB(12)-RuvC(2) complex forms which resolves the HJ. Mg(2+) serves as cofactor.

It localises to the cytoplasm. The enzyme catalyses Endonucleolytic cleavage at a junction such as a reciprocal single-stranded crossover between two homologous DNA duplexes (Holliday junction).. Functionally, the RuvA-RuvB-RuvC complex processes Holliday junction (HJ) DNA during genetic recombination and DNA repair. Endonuclease that resolves HJ intermediates. Cleaves cruciform DNA by making single-stranded nicks across the HJ at symmetrical positions within the homologous arms, yielding a 5'-phosphate and a 3'-hydroxyl group; requires a central core of homology in the junction. The consensus cleavage sequence is 5'-(A/T)TT(C/G)-3'. Cleavage occurs on the 3'-side of the TT dinucleotide at the point of strand exchange. HJ branch migration catalyzed by RuvA-RuvB allows RuvC to scan DNA until it finds its consensus sequence, where it cleaves and resolves the cruciform DNA. In Vibrio vulnificus (strain CMCP6), this protein is Crossover junction endodeoxyribonuclease RuvC.